A 173-amino-acid chain; its full sequence is Alpha-crystallin A chain (173 aa).

Met1 bears the N-acetylmethionine mark. The required for complex formation with BFSP1 and BFSP2 stretch occupies residues Met1–Glu63. Position 6 is a deamidated glutamine; partial (Gln6). Ser45 is modified (phosphoserine). Deamidated glutamine; partial is present on Gln50. Positions Leu52–Ser162 constitute a sHSP domain. Lys70 carries the N6-acetyllysine modification. Deamidated glutamine; partial is present on Gln90. The residue at position 99 (Lys99) is an N6-acetyllysine. His100 contacts Zn(2+). Asn101 carries the post-translational modification Deamidated asparagine; partial. Residues Glu102 and His107 each contribute to the Zn(2+) site. The residue at position 122 (Ser122) is a Phosphoserine. Residue Asn123 is modified to Deamidated asparagine; partial. The tract at residues Lys145–Ser173 is disordered. At Gln147 the chain carries Deamidated glutamine; partial. Residues Gly153–Pro167 are compositionally biased toward basic and acidic residues. His154 provides a ligand contact to Zn(2+). A glycan (O-linked (GlcNAc) serine) is linked at Ser162.

It belongs to the small heat shock protein (HSP20) family. In terms of assembly, heteromer composed of three CRYAA and one CRYAB subunits. Inter-subunit bridging via zinc ions enhances stability, which is crucial as there is no protein turn over in the lens. Can also form homodimers and homotetramers (dimers of dimers) which serve as the building blocks of homooligomers. Within homooligomers, the zinc-binding motif is created from residues of 3 different molecules. His-100 and Glu-102 from one molecule are ligands of the zinc ion, and His-107 and His-154 residues from additional molecules complete the site with tetrahedral coordination geometry. Part of a complex required for lens intermediate filament formation composed of BFSP1, BFSP2 and CRYAA. Acetylation at Lys-70 may increase chaperone activity. Post-translationally, undergoes age-dependent proteolytical cleavage at the C-terminus.

Its subcellular location is the cytoplasm. The protein localises to the nucleus. Contributes to the transparency and refractive index of the lens. Acts as a chaperone, preventing aggregation of various proteins under a wide range of stress conditions. Required for the correct formation of lens intermediate filaments as part of a complex composed of BFSP1, BFSP2 and CRYAA. The chain is Alpha-crystallin A chain (CRYAA) from Oryctolagus cuniculus (Rabbit).